Here is a 224-residue protein sequence, read N- to C-terminus: Flagellar L-ring protein (224 aa).

Positions 1–15 (MARYFILAAALLLTA) are cleaved as a signal peptide. A lipid anchor (N-palmitoyl cysteine) is attached at Cys16. Cys16 is lipidated: S-diacylglycerol cysteine.

Belongs to the FlgH family. In terms of assembly, the basal body constitutes a major portion of the flagellar organelle and consists of four rings (L,P,S, and M) mounted on a central rod.

The protein localises to the cell outer membrane. The protein resides in the bacterial flagellum basal body. Functionally, assembles around the rod to form the L-ring and probably protects the motor/basal body from shearing forces during rotation. The chain is Flagellar L-ring protein from Shewanella sp. (strain MR-4).